Here is a 344-residue protein sequence, read N- to C-terminus: Ferrochelatase (344 aa).

Fe cation contacts are provided by His190 and Glu270.

Belongs to the ferrochelatase family.

The protein resides in the cytoplasm. The catalysed reaction is heme b + 2 H(+) = protoporphyrin IX + Fe(2+). It functions in the pathway porphyrin-containing compound metabolism; protoheme biosynthesis; protoheme from protoporphyrin-IX: step 1/1. In terms of biological role, catalyzes the ferrous insertion into protoporphyrin IX. The protein is Ferrochelatase of Rickettsia felis (strain ATCC VR-1525 / URRWXCal2) (Rickettsia azadi).